The primary structure comprises 134 residues: MTNIRKSHPLFKIINDSFIDLPTPSSISSWWNFGSLLGVCLATQILTGLFLAMHYTSDTDTAFHSVTHICRDVNYGWILRYLHANGASMFFICLFLHVGRGIYYGSYTFSETWNIGIILLFAVMATAFMGYVLP.

3 consecutive transmembrane segments (helical) span residues 33–53 (FGSLLGVCLATQILTGLFLAM), 77–98 (WILRYLHANGASMFFICLFLHV), and 113–133 (WNIGIILLFAVMATAFMGYVL). Heme b-binding residues include His83 and His97.

Belongs to the cytochrome b family. In terms of assembly, the cytochrome bc1 complex contains 11 subunits: 3 respiratory subunits (MT-CYB, CYC1 and UQCRFS1), 2 core proteins (UQCRC1 and UQCRC2) and 6 low-molecular weight proteins (UQCRH/QCR6, UQCRB/QCR7, UQCRQ/QCR8, UQCR10/QCR9, UQCR11/QCR10 and a cleavage product of UQCRFS1). This cytochrome bc1 complex then forms a dimer. It depends on heme b as a cofactor.

The protein resides in the mitochondrion inner membrane. In terms of biological role, component of the ubiquinol-cytochrome c reductase complex (complex III or cytochrome b-c1 complex) that is part of the mitochondrial respiratory chain. The b-c1 complex mediates electron transfer from ubiquinol to cytochrome c. Contributes to the generation of a proton gradient across the mitochondrial membrane that is then used for ATP synthesis. The sequence is that of Cytochrome b (MT-CYB) from Rhinolophus hipposideros (Lesser horseshoe bat).